Consider the following 372-residue polypeptide: 12-oxophytodienoate reductase 1 (372 aa).

Met-1 is modified (N-acetylmethionine). FMN-binding positions include 31 to 33, Ala-64, and Gln-106; that span reads PLT. Residue His-183 participates in substrate binding. Tyr-188 (proton donor) is an active-site residue. Arg-235 is a binding site for FMN. Position 275 (Arg-275) interacts with substrate. Residues 303 to 305 and 326 to 327 each bind FMN; these read AGG and GR.

It belongs to the NADH:flavin oxidoreductase/NADH oxidase family. FMN serves as cofactor. As to expression, mostly expressed in roots, also present in leaves, shoots and flowers. More abundant in cotyledons. In more details, expressed in peduncles, sepals, petals, around the abscission zone of siliques, maturing siliques and developing seeds.

Its subcellular location is the cytoplasm. It catalyses the reaction (1S,2S)-OPC-8 + NADP(+) = (9S,13S,15Z)-12-oxophyto-10,15-dienoate + NADPH + H(+). It functions in the pathway lipid metabolism; oxylipin biosynthesis. Its function is as follows. Specifically cleaves olefinic bonds in alpha,beta-unsaturated carbonyls and may be involved in detoxification or modification of these reactive compounds. May be involved in the biosynthesis or metabolism of oxylipin signaling molecules. In vitro, reduces 9R,13R-12-oxophytodienoic acid (9R,13R-OPDA) to 9R,13R-OPC-8:0, but only poorly 9S,13S-OPDA, the natural precursor of jasmonic acid. Can detoxify the explosive 2,4,6-trinitrotoluene (TNT) in vitro and in vivo by catalyzing its nitroreduction to form hydroxylamino-dinitrotoluene (HADNT). The sequence is that of 12-oxophytodienoate reductase 1 from Arabidopsis thaliana (Mouse-ear cress).